The chain runs to 406 residues: uncharacterized protein (406 aa).

It belongs to the glycosyltransferase group 1 family. Glycosyltransferase 4 subfamily.

This is an uncharacterized protein from Methanocaldococcus jannaschii (strain ATCC 43067 / DSM 2661 / JAL-1 / JCM 10045 / NBRC 100440) (Methanococcus jannaschii).